A 69-amino-acid chain; its full sequence is Large ribosomal subunit protein uL29 (69 aa).

It belongs to the universal ribosomal protein uL29 family.

The chain is Large ribosomal subunit protein uL29 from Thermoanaerobacter pseudethanolicus (strain ATCC 33223 / 39E) (Clostridium thermohydrosulfuricum).